The chain runs to 221 residues: Translation initiation factor 6 (221 aa).

It belongs to the eIF-6 family.

Functionally, binds to the 50S ribosomal subunit and prevents its association with the 30S ribosomal subunit to form the 70S initiation complex. This is Translation initiation factor 6 from Cenarchaeum symbiosum (strain A).